Reading from the N-terminus, the 435-residue chain is Polyadenylate-binding protein RBP47B (435 aa).

Positions 1 to 15 are enriched in polar residues; that stretch reads MQTTNGSDSTLATSG. 2 disordered regions span residues 1–41 and 85–104; these read MQTT…QQWM and YGSY…RGSG. Residues 29 to 41 show a composition bias toward low complexity; sequence QWQQQQQQQQQWM. 3 consecutive RRM domains span residues 108 to 188, 202 to 281, and 321 to 393; these read KTLW…WASF, LSVF…IATP, and ATIF…WGRS. Residues 392–412 are disordered; the sequence is RSPNKQWRGDSGQQWNGGYSR.

The protein belongs to the polyadenylate-binding RBP47 family. Interacts with the poly(A) tail of mRNA in nucleus. Expressed at low levels in leaves, stems, flowers, and seedlings.

Its subcellular location is the nucleus. The protein resides in the cytoplasmic granule. In terms of biological role, heterogeneous nuclear ribonucleoprotein (hnRNP)-protein binding the poly(A) tail of mRNA and probably involved in some steps of pre-mRNA maturation. In Arabidopsis thaliana (Mouse-ear cress), this protein is Polyadenylate-binding protein RBP47B (RBP47B).